A 246-amino-acid polypeptide reads, in one-letter code: tRNA (guanine-N(1)-)-methyltransferase (246 aa).

S-adenosyl-L-methionine is bound by residues Gly113 and 133–138 (IGDYVL).

The protein belongs to the RNA methyltransferase TrmD family. In terms of assembly, homodimer.

Its subcellular location is the cytoplasm. The catalysed reaction is guanosine(37) in tRNA + S-adenosyl-L-methionine = N(1)-methylguanosine(37) in tRNA + S-adenosyl-L-homocysteine + H(+). In terms of biological role, specifically methylates guanosine-37 in various tRNAs. The polypeptide is tRNA (guanine-N(1)-)-methyltransferase (Haemophilus influenzae (strain 86-028NP)).